The following is a 60-amino-acid chain: Large ribosomal subunit protein uL30 (60 aa).

It belongs to the universal ribosomal protein uL30 family. Part of the 50S ribosomal subunit.

The protein is Large ribosomal subunit protein uL30 of Sphingopyxis alaskensis (strain DSM 13593 / LMG 18877 / RB2256) (Sphingomonas alaskensis).